We begin with the raw amino-acid sequence, 291 residues long: Nucleotide-binding protein RALTA_A0325 (291 aa).

8-15 (GISGSGKS) contacts ATP. Residue 57-60 (DIRS) coordinates GTP.

Belongs to the RapZ-like family.

Displays ATPase and GTPase activities. The protein is Nucleotide-binding protein RALTA_A0325 of Cupriavidus taiwanensis (strain DSM 17343 / BCRC 17206 / CCUG 44338 / CIP 107171 / LMG 19424 / R1) (Ralstonia taiwanensis (strain LMG 19424)).